Here is a 290-residue protein sequence, read N- to C-terminus: Dihydroorotate dehydrogenase B (NAD(+)), catalytic subunit (290 aa).

Residues S17 and 42 to 43 (KT) contribute to the FMN site. Residues K42, 67 to 71 (NAIGL), and N117 each bind substrate. Position 117 (N117) interacts with FMN. Catalysis depends on S120, which acts as the Nucleophile. FMN-binding residues include K152 and I177. Position 178 to 179 (178 to 179 (NT)) interacts with substrate. FMN contacts are provided by residues G203, 229–230 (GG), and 251–252 (GT).

This sequence belongs to the dihydroorotate dehydrogenase family. Type 1 subfamily. Heterotetramer of 2 PyrK and 2 PyrD type B subunits. FMN is required as a cofactor.

The protein localises to the cytoplasm. It catalyses the reaction (S)-dihydroorotate + NAD(+) = orotate + NADH + H(+). Its pathway is pyrimidine metabolism; UMP biosynthesis via de novo pathway; orotate from (S)-dihydroorotate (NAD(+) route): step 1/1. Its function is as follows. Catalyzes the conversion of dihydroorotate to orotate with NAD(+) as electron acceptor. This chain is Dihydroorotate dehydrogenase B (NAD(+)), catalytic subunit (pyrD), found in Saccharolobus solfataricus (strain ATCC 35092 / DSM 1617 / JCM 11322 / P2) (Sulfolobus solfataricus).